Here is a 1103-residue protein sequence, read N- to C-terminus: A disintegrin and metalloproteinase with thrombospondin motifs 10 (1103 aa).

Residues 1–25 (MAPACQILRWALALGLGLMFEVTHA) form the signal peptide. Positions 26-233 (FRSQDEFLSS…TERGQPGLKR (208 aa)) are excised as a propeptide. 3 N-linked (GlcNAc...) asparagine glycosylation sites follow: N90, N222, and N323. The interval 213–233 (KPPPARPLGNETERGQPGLKR) is disordered. Residues 239 to 457 (RYVETLVVAD…GLGLCLNNRP (219 aa)) form the Peptidase M12B domain. Disulfide bonds link C315/C376, C351/C358, C370/C452, C409/C436, C479/C501, C490/C508, C496/C531, C521/C536, C559/C596, C563/C601, and C574/C586. H392 provides a ligand contact to Zn(2+). The active site involves E393. Zn(2+) contacts are provided by H396 and H402. The region spanning 460–546 (QDFVYPTVAP…VPFGSRPEGV (87 aa)) is the Disintegrin domain. The region spanning 547–602 (DGAWGPWTPWGDCSRTCGGGVSSSSRHCDSPRPTIGGKYCLGERRRHRSCNTDDCP) is the TSP type-1 1 domain. Positions 706–828 (ETIEGVFSPA…IARDSLPPYS (123 aa)) are spacer. 2 N-linked (GlcNAc...) asparagine glycosylation sites follow: N740 and N795. TSP type-1 domains lie at 825-883 (PPYS…NTEP), 884-945 (CPPD…PTCP), 947-1001 (EWAA…NLRR), and 1003-1058 (PPAR…AKCD). An N-linked (GlcNAc...) asparagine glycan is attached at N892. One can recognise a PLAC domain in the interval 1065-1103 (GPEECKDVNKVAYCPLVLKFQFCSRAYFRQMCCKTCHGH).

Interacts with FBN1; this interaction promotes microfibrils assembly. The cofactor is Zn(2+). Post-translationally, glycosylated. Can be O-fucosylated by POFUT2 on a serine or a threonine residue found within the consensus sequence C1-X(2)-(S/T)-C2-G of the TSP type-1 repeat domains where C1 and C2 are the first and second cysteine residue of the repeat, respectively. Fucosylated repeats can then be further glycosylated by the addition of a beta-1,3-glucose residue by the glucosyltransferase, B3GALTL. Fucosylation mediates the efficient secretion of ADAMTS family members. Can also be C-glycosylated with one or two mannose molecules on tryptophan residues within the consensus sequence W-X-X-W of the TPRs, and N-glycosylated. These other glycosylations can also facilitate secretion. As to expression, widely expressed in adult tissues.

It localises to the secreted. It is found in the extracellular space. The protein resides in the extracellular matrix. In terms of biological role, metalloprotease that participate in microfibrils assembly. Microfibrils are extracellular matrix components occurring independently or along with elastin in the formation of elastic tissues. The chain is A disintegrin and metalloproteinase with thrombospondin motifs 10 (ADAMTS10) from Homo sapiens (Human).